A 183-amino-acid polypeptide reads, in one-letter code: MTTASPSQVRQNYHQDSEAAINRQINLELYASYVYLSMSYYFDRDDVALKNFAKYFLHQSHEEREHAEKLMKLQNQRGGRIFLQDIKKPDRDDWENGLNAMECALHLEKSVNQSLLELHKLATDKNDPHLCDFIETHYLNEQVKSIKELGDHVTNLRKMGTPESGMAEYLFDKHTLGNSDSES.

Methionine 1 carries the N-acetylmethionine modification. N-acetylthreonine; in Ferritin heavy chain, N-terminally processed is present on threonine 2. Residues 11-160 (QNYHQDSEAA…DHVTNLRKMG (150 aa)) form the Ferritin-like diiron domain. Positions 28, 63, 66, 108, and 142 each coordinate Fe cation. 2 positions are modified to phosphoserine: serine 179 and serine 183.

Belongs to the ferritin family. As to quaternary structure, oligomer of 24 subunits. There are two types of subunits: L (light) chain and H (heavy) chain. The major chain can be light or heavy, depending on the species and tissue type. The functional molecule forms a roughly spherical shell with a diameter of 12 nm and contains a central cavity into which the insoluble mineral iron core is deposited. Interacts with NCOA4; NCOA4 promotes targeting of the iron-binding ferritin complex to autolysosomes following starvation or iron depletion.

Its subcellular location is the cytoplasm. It localises to the lysosome. The protein resides in the cytoplasmic vesicle. The protein localises to the autophagosome. The enzyme catalyses 4 Fe(2+) + O2 + 4 H(+) = 4 Fe(3+) + 2 H2O. Its function is as follows. Stores iron in a soluble, non-toxic, readily available form. Important for iron homeostasis. Has ferroxidase activity. Iron is taken up in the ferrous form and deposited as ferric hydroxides after oxidation. Also plays a role in delivery of iron to cells. Mediates iron uptake in capsule cells of the developing kidney. Delivery to lysosomes is mediated by the cargo receptor NCOA4 for autophagic degradation and release of iron. The sequence is that of Ferritin heavy chain (FTH1) from Felis catus (Cat).